We begin with the raw amino-acid sequence, 329 residues long: ATP-dependent (S)-NAD(P)H-hydrate dehydratase (329 aa).

In terms of domain architecture, YjeF C-terminal spans 35–326 (TLQLVRNIIP…AEVGAAFSKL (292 aa)). A Phosphotyrosine modification is found at Y67. Residues G135 and 188–194 (NHMEFSR) each bind (6S)-NADPHX. N207 and N222 each carry an N-linked (GlcNAc...) asparagine glycan. Residues 228–232 (KGERD) and 247–256 (GSSRRCGGQG) each bind ATP. (6S)-NADPHX is bound at residue D257. The N-linked (GlcNAc...) asparagine glycan is linked to N279.

The protein belongs to the NnrD/CARKD family. The cofactor is Mg(2+).

It is found in the mitochondrion. It carries out the reaction (6S)-NADHX + ATP = ADP + phosphate + NADH + H(+). It catalyses the reaction (6S)-NADPHX + ATP = ADP + phosphate + NADPH + H(+). Functionally, catalyzes the dehydration of the S-form of NAD(P)HX at the expense of ATP, which is converted to ADP. Together with NAD(P)HX epimerase, which catalyzes the epimerization of the S- and R-forms, the enzyme allows the repair of both epimers of NAD(P)HX, a damaged form of NAD(P)H that is a result of enzymatic or heat-dependent hydration. In Pongo abelii (Sumatran orangutan), this protein is ATP-dependent (S)-NAD(P)H-hydrate dehydratase.